The sequence spans 835 residues: uncharacterized protein (835 aa).

5 disordered regions span residues methionine 1–arginine 38, aspartate 317–arginine 477, serine 489–arginine 668, aspartate 721–phenylalanine 750, and glutamine 810–phenylalanine 835. Low complexity-rich tracts occupy residues serine 7–serine 37, asparagine 328–threonine 351, and serine 361–serine 395. Polar residues-rich tracts occupy residues isoleucine 396–isoleucine 406 and isoleucine 415–threonine 424. Positions glycine 432 to methionine 442 are enriched in gly residues. The segment covering proline 449–arginine 477 has biased composition (polar residues). Positions serine 489–proline 510 are enriched in low complexity. Positions isoleucine 511–proline 521 are enriched in pro residues. The segment covering threonine 522–serine 629 has biased composition (low complexity). Over residues isoleucine 631–glutamine 640 the composition is skewed to polar residues. Low complexity-rich tracts occupy residues threonine 641 to serine 664 and asparagine 724 to phenylalanine 750. Residues isoleucine 826–phenylalanine 835 show a composition bias toward acidic residues.

This is an uncharacterized protein from Dictyostelium discoideum (Social amoeba).